The chain runs to 293 residues: Elongation factor Ts (293 aa).

Residues 80–83 (TDFV) are involved in Mg(2+) ion dislocation from EF-Tu.

This sequence belongs to the EF-Ts family.

Its subcellular location is the cytoplasm. Its function is as follows. Associates with the EF-Tu.GDP complex and induces the exchange of GDP to GTP. It remains bound to the aminoacyl-tRNA.EF-Tu.GTP complex up to the GTP hydrolysis stage on the ribosome. This is Elongation factor Ts from Aeromonas salmonicida (strain A449).